We begin with the raw amino-acid sequence, 119 residues long: Large ribosomal subunit protein uL18 (119 aa).

The tract at residues methionine 1–glycine 23 is disordered.

Belongs to the universal ribosomal protein uL18 family. Part of the 50S ribosomal subunit; part of the 5S rRNA/L5/L18/L25 subcomplex. Contacts the 5S and 23S rRNAs.

Its function is as follows. This is one of the proteins that bind and probably mediate the attachment of the 5S RNA into the large ribosomal subunit, where it forms part of the central protuberance. The chain is Large ribosomal subunit protein uL18 from Chlorobium chlorochromatii (strain CaD3).